The following is a 192-amino-acid chain: NF-kappa-B inhibitor-interacting Ras-like protein 1 (192 aa).

A GTP-binding site is contributed by 11 to 18; the sequence is GLLSVGKT. Positions 35–43 match the Effector region motif; the sequence is DCETMEDVY. An interactions with NFKBIA and NFKBIB region spans residues 58-93; the sequence is HLYDTRGLQEGVELPKHYFSFADGFVLVYSVNNLES. Residues 61-65 and 120-123 contribute to the GTP site; these read DTRGL and NKID. The disordered stretch occupies residues 168-192; that stretch reads LSQPQSKSSFPLPGRKNKGNSNSEN.

It belongs to the small GTPase superfamily. Ras family. KappaB-Ras subfamily. In terms of assembly, interacts with both NF-kappa-B inhibitor alpha (NFKBIA) and beta (NFKBIB) in vitro. However, it probably only interacts with NFKBIB in vivo. Forms a complex with NFKBIB and NF-kappa-B heterodimer (p50/NFKB1 and p65/RELA). Also interacts with c-Rel (REL). As to expression, widely expressed.

The protein resides in the cytoplasm. Its function is as follows. Atypical Ras-like protein that acts as a potent regulator of NF-kappa-B activity by preventing the degradation of NF-kappa-B inhibitor beta (NFKBIB) by most signals, explaining why NFKBIB is more resistant to degradation. May act by blocking phosphorylation of NFKBIB and mediating cytoplasmic retention of p65/RELA NF-kappa-B subunit. It is unclear whether it acts as a GTPase. Both GTP- and GDP-bound forms block phosphorylation of NFKBIB. The sequence is that of NF-kappa-B inhibitor-interacting Ras-like protein 1 (NKIRAS1) from Homo sapiens (Human).